The sequence spans 126 residues: S-adenosylmethionine decarboxylase proenzyme (126 aa).

Ser-63 serves as the catalytic Schiff-base intermediate with substrate; via pyruvic acid. At Ser-63 the chain carries Pyruvic acid (Ser); by autocatalysis. His-68 functions as the Proton acceptor; for processing activity in the catalytic mechanism. Cys-83 (proton donor; for catalytic activity) is an active-site residue.

The protein belongs to the prokaryotic AdoMetDC family. Type 1 subfamily. In terms of assembly, heterotetramer of two alpha and two beta chains arranged as a dimer of alpha/beta heterodimers. Pyruvate serves as cofactor. Post-translationally, is synthesized initially as an inactive proenzyme. Formation of the active enzyme involves a self-maturation process in which the active site pyruvoyl group is generated from an internal serine residue via an autocatalytic post-translational modification. Two non-identical subunits are generated from the proenzyme in this reaction, and the pyruvate is formed at the N-terminus of the alpha chain, which is derived from the carboxyl end of the proenzyme. The post-translation cleavage follows an unusual pathway, termed non-hydrolytic serinolysis, in which the side chain hydroxyl group of the serine supplies its oxygen atom to form the C-terminus of the beta chain, while the remainder of the serine residue undergoes an oxidative deamination to produce ammonia and the pyruvoyl group blocking the N-terminus of the alpha chain.

It catalyses the reaction S-adenosyl-L-methionine + H(+) = S-adenosyl 3-(methylsulfanyl)propylamine + CO2. It functions in the pathway amine and polyamine biosynthesis; S-adenosylmethioninamine biosynthesis; S-adenosylmethioninamine from S-adenosyl-L-methionine: step 1/1. Functionally, catalyzes the decarboxylation of S-adenosylmethionine to S-adenosylmethioninamine (dcAdoMet), the propylamine donor required for the synthesis of the polyamines spermine and spermidine from the diamine putrescine. This chain is S-adenosylmethionine decarboxylase proenzyme, found in Clostridium kluyveri (strain NBRC 12016).